A 596-amino-acid polypeptide reads, in one-letter code: Interleukin-1 receptor-associated kinase 3 (596 aa).

The Death domain maps to 41–106 (WRGLAERLSS…RAIHLITNYG (66 aa)). Residue serine 110 is modified to Phosphoserine; by IRAK1. The Protein kinase domain occupies 165–452 (FHKDFLIGEG…LESTQASLYF (288 aa)). Residues 171–179 (IGEGEIFEV), lysine 192, 295–298 (SSAN), and aspartate 311 each bind ATP. At serine 467 the chain carries Phosphoserine. The segment at 560-596 (NIDPSSEAPGHSCRSRPVESSCSSKFSWDEYEQYKKE) is disordered.

Belongs to the protein kinase superfamily. TKL Ser/Thr protein kinase family. Pelle subfamily. In terms of assembly, monomer. Homodimer; disulfide-linked. May interact with IRAK4 (when phosphorylated). Interacts (when phosphorylated at Ser-110) with PIN1 (via WW domain) in response to IL33-mediated (but not TLR4 ligand LPS) dendritic cell stimulation. In terms of tissue distribution, expressed in eosinophils, dendritic cells and/or monocytes (at protein level). Expressed predominantly in peripheral blood lymphocytes.

It localises to the cytoplasm. The protein resides in the nucleus. Its function is as follows. Putative inactive protein kinase which regulates signaling downstream of immune receptors including IL1R and Toll-like receptors. Inhibits dissociation of IRAK1 and IRAK4 from the Toll-like receptor signaling complex by either inhibiting the phosphorylation of IRAK1 and IRAK4 or stabilizing the receptor complex. Upon IL33-induced lung inflammation, positively regulates expression of IL6, CSF3, CXCL2 and CCL5 mRNAs in dendritic cells. The chain is Interleukin-1 receptor-associated kinase 3 from Homo sapiens (Human).